Here is a 285-residue protein sequence, read N- to C-terminus: MATARQGENTISLEAIPSNLPSRPTILVFDSGVGGLSVYDEIRQLLPDLHYIYAFDNEAFPYGEKSQQFIIERVVEIVSAVQQRHQLALVVIACNTASTISLPALRERFTFPVVGVVPAVKPAAKLTRNGVVGLLATRATVQRPYTHELITRFATDCQILSLGSSELVELAEAKLQGEAISISELQKILRPWLRLTEPPDTVVLGCTHFPLLAEELKMVLPEGTRLVDSGAAIAKRTAWLIANLDNPPLSTDRNLVYCLKITPKVATLWPILQRYGFNSLEKLPL.

Substrate-binding positions include 30 to 31 and 62 to 63; these read DS and YG. The active-site Proton donor/acceptor is Cys94. 95 to 96 contacts substrate; sequence NT. The active-site Proton donor/acceptor is Cys206. A substrate-binding site is contributed by 207–208; that stretch reads TH.

It belongs to the aspartate/glutamate racemases family.

It catalyses the reaction L-glutamate = D-glutamate. The protein operates within cell wall biogenesis; peptidoglycan biosynthesis. Its function is as follows. Provides the (R)-glutamate required for cell wall biosynthesis. The sequence is that of Glutamate racemase from Pectobacterium atrosepticum (strain SCRI 1043 / ATCC BAA-672) (Erwinia carotovora subsp. atroseptica).